A 2214-amino-acid polypeptide reads, in one-letter code: Genome polyprotein (2214 aa).

Disordered stretches follow at residues 1 to 21 (MGAQ…VATG) and 600 to 619 (KPQK…VNSQ). A lipid anchor (N-myristoyl glycine; by host) is attached at G2. Residues 2-1525 (GAQVSSQKVG…NLNRAMTILQ (1524 aa)) lie on the Cytoplasmic side of the membrane. Amphipathic alpha-helix stretches follow at residues 580–601 (QGIE…QPKP) and 581–601 (GIEE…QPKP). Residues 606-619 (TAQSTPSTSGVNSQ) are compositionally biased toward polar residues. Residues H906 and D924 each act as for protease 2A activity in the active site. Zn(2+) contacts are provided by C941 and C943. The active-site For protease 2A activity is the C995. Positions 1001 and 1003 each coordinate Zn(2+). Residues 1133-1205 (GDSWLKKFTE…HQSCPSQEQQ (73 aa)) are membrane-binding. The segment at 1133 to 1271 (GDSWLKKFTE…SPGTGKSIAT (139 aa)) is oligomerization. The interval 1154–1158 (SNKIS) is RNA-binding. Residues 1237–1393 (ENTINNYIQF…SEHSIKGKLN (157 aa)) enclose the SF3 helicase domain. 1261–1268 (GSPGTGKS) contributes to the ATP binding site. Positions 1401, 1404, 1413, and 1418 each coordinate Zn(2+). The C4-type zinc finger occupies 1401–1418 (CKDCPQPANFKKCCPLVC). The tract at residues 1445-1452 (ERNRRANI) is RNA-binding. Residues 1456–1461 (MEALFQ) form an oligomerization region. An intramembrane segment occupies 1526-1541 (AVTTFAAVAAVVYVMY). Residues 1542–2214 (KLFAGHQGAY…TLYRRWLDSF (673 aa)) are Cytoplasmic-facing. The residue at position 1551 (Y1551) is an O-(5'-phospho-RNA)-tyrosine. Residues 1571 to 1749 (GPGFDYAVAM…FAAALKRSYF (179 aa)) enclose the Peptidase C3 domain. Catalysis depends on for protease 3C activity residues H1610, E1641, and C1717. The 116-residue stretch at 1980-2095 (EKLFAFDYTG…SYPHEVDASL (116 aa)) folds into the RdRp catalytic domain. Positions 1986 and 2081 each coordinate Mg(2+).

The protein belongs to the picornaviruses polyprotein family. Interacts with capsid protein VP1 and capsid protein VP3 to form heterotrimeric protomers. As to quaternary structure, interacts with capsid protein VP0, and capsid protein VP3 to form heterotrimeric protomers. Five protomers subsequently associate to form pentamers which serve as building blocks for the capsid. Interacts with capsid protein VP2, capsid protein VP3 and capsid protein VP4 following cleavage of capsid protein VP0. In terms of assembly, interacts with capsid protein VP1 and capsid protein VP3 in the mature capsid. Interacts with capsid protein VP0 and capsid protein VP1 to form heterotrimeric protomers. Five protomers subsequently associate to form pentamers which serve as building blocks for the capsid. Interacts with capsid protein VP4 in the mature capsid. Interacts with protein 2C; this interaction may be important for virion morphogenesis. As to quaternary structure, interacts with capsid protein VP1 and capsid protein VP3. In terms of assembly, homodimer. Homohexamer; forms a hexameric ring structure with 6-fold symmetry characteristic of AAA+ ATPases. Interacts (via N-terminus) with host RTN3 (via reticulon domain); this interaction is important for viral replication. Interacts with capsid protein VP3; this interaction may be important for virion morphogenesis. As to quaternary structure, interacts with protein 3CD. In terms of assembly, homodimer. Interacts with host GBF1. Interacts (via GOLD domain) with host ACBD3 (via GOLD domain); this interaction allows the formation of a viral protein 3A/ACBD3 heterotetramer with a 2:2 stoichiometry, which will stimulate the recruitment of host PI4KB in order to synthesize PI4P at the viral RNA replication sites. Interacts with RNA-directed RNA polymerase. As to quaternary structure, interacts with protein 3AB and with RNA-directed RNA polymerase. In terms of assembly, interacts with Viral protein genome-linked and with protein 3CD. Mg(2+) serves as cofactor. Specific enzymatic cleavages in vivo by the viral proteases yield processing intermediates and the mature proteins. In terms of processing, myristoylation is required for the formation of pentamers during virus assembly. Further assembly of 12 pentamers and a molecule of genomic RNA generates the provirion. Post-translationally, during virion maturation, immature virions are rendered infectious following cleavage of VP0 into VP4 and VP2. This maturation seems to be an autocatalytic event triggered by the presence of RNA in the capsid and it is followed by a conformational change infectious virion. Myristoylation is required during RNA encapsidation and formation of the mature virus particle. In terms of processing, VPg is uridylylated by the polymerase into VPg-pUpU. This acts as a nucleotide-peptide primer for the genomic RNA replication.

It localises to the virion. Its subcellular location is the host cytoplasm. The protein resides in the host cytoplasmic vesicle membrane. It is found in the host nucleus. It catalyses the reaction a ribonucleoside 5'-triphosphate + H2O = a ribonucleoside 5'-diphosphate + phosphate + H(+). The catalysed reaction is Selective cleavage of Tyr-|-Gly bond in the picornavirus polyprotein.. The enzyme catalyses RNA(n) + a ribonucleoside 5'-triphosphate = RNA(n+1) + diphosphate. It carries out the reaction Selective cleavage of Gln-|-Gly bond in the poliovirus polyprotein. In other picornavirus reactions Glu may be substituted for Gln, and Ser or Thr for Gly.. Replication or transcription is subject to high level of random mutations by the nucleotide analog ribavirin. Its function is as follows. Forms an icosahedral capsid of pseudo T=3 symmetry with capsid proteins VP2 and VP3. The capsid is 300 Angstroms in diameter, composed of 60 copies of each capsid protein and enclosing the viral positive strand RNA genome. Capsid protein VP1 mainly forms the vertices of the capsid. Capsid protein VP1 interacts with host cell receptor to provide virion attachment to target host cells. This attachment induces virion internalization. Tyrosine kinases are probably involved in the entry process. After binding to its receptor, the capsid undergoes conformational changes. Capsid protein VP1 N-terminus (that contains an amphipathic alpha-helix) and capsid protein VP4 are externalized. Together, they shape a pore in the host membrane through which viral genome is translocated to host cell cytoplasm. Functionally, forms an icosahedral capsid of pseudo T=3 symmetry with capsid proteins VP2 and VP3. The capsid is 300 Angstroms in diameter, composed of 60 copies of each capsid protein and enclosing the viral positive strand RNA genome. In terms of biological role, lies on the inner surface of the capsid shell. After binding to the host receptor, the capsid undergoes conformational changes. Capsid protein VP4 is released, Capsid protein VP1 N-terminus is externalized, and together, they shape a pore in the host membrane through which the viral genome is translocated into the host cell cytoplasm. Component of immature procapsids, which is cleaved into capsid proteins VP4 and VP2 after maturation. Allows the capsid to remain inactive before the maturation step. Its function is as follows. Cysteine protease that cleaves viral polyprotein and specific host proteins. It is responsible for the autocatalytic cleavage between the P1 and P2 regions, which is the first cleavage occurring in the polyprotein. Also cleaves the host translation initiation factor EIF4G1, in order to shut down the capped cellular mRNA translation. Inhibits the host nucleus-cytoplasm protein and RNA trafficking by cleaving host members of the nuclear pores. Counteracts stress granule formation probably by antagonizing its assembly or promoting its dissassembly. Cleaves and inhibits host IFIH1/MDA5, thereby inhibiting the type-I IFN production and the establishment of the antiviral state. Cleaves and inhibits host MAVS, thereby inhibiting the type-I IFN production and the establishment of the antiviral state. Functionally, plays an essential role in the virus replication cycle by acting as a viroporin. Creates a pore in the host endoplasmic reticulum and as a consequence releases Ca2+ in the cytoplasm of infected cell. In turn, high levels of cytoplasmic calcium may trigger membrane trafficking and transport of viral ER-associated proteins to viroplasms, sites of viral genome replication. In terms of biological role, induces and associates with structural rearrangements of intracellular membranes. Displays RNA-binding, nucleotide binding and NTPase activities. May play a role in virion morphogenesis and viral RNA encapsidation by interacting with the capsid protein VP3. Localizes the viral replication complex to the surface of membranous vesicles. Together with protein 3CD binds the Cis-Active RNA Element (CRE) which is involved in RNA synthesis initiation. Acts as a cofactor to stimulate the activity of 3D polymerase, maybe through a nucleid acid chaperone activity. Its function is as follows. Localizes the viral replication complex to the surface of membranous vesicles. It inhibits host cell endoplasmic reticulum-to-Golgi apparatus transport and causes the disassembly of the Golgi complex, possibly through GBF1 interaction. This would result in depletion of MHC, trail receptors and IFN receptors at the host cell surface. Plays an essential role in viral RNA replication by recruiting ACBD3 and PI4KB at the viral replication sites, thereby allowing the formation of the rearranged membranous structures where viral replication takes place. Functionally, acts as a primer for viral RNA replication and remains covalently bound to viral genomic RNA. VPg is uridylylated prior to priming replication into VPg-pUpU. The oriI viral genomic sequence may act as a template for this. The VPg-pUpU is then used as primer on the genomic RNA poly(A) by the RNA-dependent RNA polymerase to replicate the viral genome. During genome replication, the VPg-RNA linkage is removed by the host TDP2, thereby accelerating replication. During the late stage of the replication cycle, host TDP2 is excluded from sites of viral RNA synthesis and encapsidation, allowing for the generation of progeny virions. In terms of biological role, involved in the viral replication complex and viral polypeptide maturation. It exhibits protease activity with a specificity and catalytic efficiency that is different from protease 3C. Protein 3CD lacks polymerase activity. Protein 3CD binds to the 5'UTR of the viral genome. Replicates the viral genomic RNA on the surface of intracellular membranes. May form linear arrays of subunits that propagate along a strong head-to-tail interaction called interface-I. Covalently attaches UMP to a tyrosine of VPg, which is used to prime RNA synthesis. The positive stranded RNA genome is first replicated at virus induced membranous vesicles, creating a dsRNA genomic replication form. This dsRNA is then used as template to synthesize positive stranded RNA genomes. ss(+)RNA genomes are either translated, replicated or encapsidated. Its function is as follows. Major viral protease that mediates proteolytic processing of the polyprotein. Cleaves host EIF5B, contributing to host translation shutoff. Also cleaves host PABPC1, contributing to host translation shutoff. Cleaves host NLRP1, triggers host N-glycine-mediated degradation of the autoinhibitory NLRP1 N-terminal fragment. This is Genome polyprotein from Coxsackievirus A24 (strain EH24/70).